The chain runs to 274 residues: Pyrroline-5-carboxylate reductase 3 (274 aa).

Ala2 is modified (N-acetylalanine).

It belongs to the pyrroline-5-carboxylate reductase family. As to quaternary structure, homodecamer; composed of 5 homodimers.

The protein resides in the cytoplasm. It carries out the reaction L-proline + NADP(+) = (S)-1-pyrroline-5-carboxylate + NADPH + 2 H(+). It catalyses the reaction L-proline + NAD(+) = (S)-1-pyrroline-5-carboxylate + NADH + 2 H(+). Its pathway is amino-acid biosynthesis; L-proline biosynthesis; L-proline from L-glutamate 5-semialdehyde: step 1/1. Its function is as follows. Oxidoreductase that catalyzes the last step in proline biosynthesis, which corresponds to the reduction of pyrroline-5-carboxylate (P5C) to L-proline using NAD(P)H. Proline is synthesized from either glutamate or ornithine; both are converted to P5C, and then to proline via pyrroline-5-carboxylate reductases (PYCRs). PYCR3 is exclusively linked to the biosynthesis of proline from ornithine. This chain is Pyrroline-5-carboxylate reductase 3, found in Macaca fascicularis (Crab-eating macaque).